Consider the following 71-residue polypeptide: Translation initiation factor IF-1 (71 aa).

Positions 1–71 (MSKDDLIQFT…LTKGRVIHRH (71 aa)) constitute an S1-like domain.

It belongs to the IF-1 family. In terms of assembly, component of the 30S ribosomal translation pre-initiation complex which assembles on the 30S ribosome in the order IF-2 and IF-3, IF-1 and N-formylmethionyl-tRNA(fMet); mRNA recruitment can occur at any time during PIC assembly.

It is found in the cytoplasm. Functionally, one of the essential components for the initiation of protein synthesis. Stabilizes the binding of IF-2 and IF-3 on the 30S subunit to which N-formylmethionyl-tRNA(fMet) subsequently binds. Helps modulate mRNA selection, yielding the 30S pre-initiation complex (PIC). Upon addition of the 50S ribosomal subunit IF-1, IF-2 and IF-3 are released leaving the mature 70S translation initiation complex. The chain is Translation initiation factor IF-1 from Rickettsia prowazekii (strain Madrid E).